The chain runs to 199 residues: dITP/XTP pyrophosphatase (199 aa).

Substrate is bound at residue 7 to 12; sequence SNNRGK. Mg(2+)-binding residues include Asp-39 and Asp-68. The active-site Proton acceptor is the Asp-68. Residues Ala-69, 154–157, Lys-177, and 182–183 contribute to the substrate site; these read FGFD and HR.

This sequence belongs to the HAM1 NTPase family. In terms of assembly, homodimer. Requires Mg(2+) as cofactor.

The catalysed reaction is XTP + H2O = XMP + diphosphate + H(+). It catalyses the reaction dITP + H2O = dIMP + diphosphate + H(+). The enzyme catalyses ITP + H2O = IMP + diphosphate + H(+). Functionally, pyrophosphatase that catalyzes the hydrolysis of nucleoside triphosphates to their monophosphate derivatives, with a high preference for the non-canonical purine nucleotides XTP (xanthosine triphosphate), dITP (deoxyinosine triphosphate) and ITP. Seems to function as a house-cleaning enzyme that removes non-canonical purine nucleotides from the nucleotide pool, thus preventing their incorporation into DNA/RNA and avoiding chromosomal lesions. The sequence is that of dITP/XTP pyrophosphatase from Paracidovorax citrulli (strain AAC00-1) (Acidovorax citrulli).